The following is a 169-amino-acid chain: Co-chaperone protein HscB homolog (169 aa).

The J domain maps to 2-74 (NYFDLFSLPV…CLRAQYLLLL (73 aa)).

Belongs to the HscB family. As to quaternary structure, interacts with HscA and stimulates its ATPase activity.

Co-chaperone involved in the maturation of iron-sulfur cluster-containing proteins. Seems to help targeting proteins to be folded toward HscA. The chain is Co-chaperone protein HscB homolog from Psychromonas ingrahamii (strain DSM 17664 / CCUG 51855 / 37).